A 495-amino-acid polypeptide reads, in one-letter code: N-succinylglutamate 5-semialdehyde dehydrogenase (495 aa).

NAD(+) is bound at residue 228-233; that stretch reads GSYATG. Active-site residues include E251 and C285.

Belongs to the aldehyde dehydrogenase family. AstD subfamily.

The enzyme catalyses N-succinyl-L-glutamate 5-semialdehyde + NAD(+) + H2O = N-succinyl-L-glutamate + NADH + 2 H(+). The protein operates within amino-acid degradation; L-arginine degradation via AST pathway; L-glutamate and succinate from L-arginine: step 4/5. In terms of biological role, catalyzes the NAD-dependent reduction of succinylglutamate semialdehyde into succinylglutamate. The protein is N-succinylglutamate 5-semialdehyde dehydrogenase of Legionella pneumophila (strain Corby).